Consider the following 372-residue polypeptide: tRNA-specific 2-thiouridylase MnmA (372 aa).

Residues 17 to 24 (GMSGGVDS) and methionine 43 each bind ATP. The interval 103-105 (NPD) is interaction with target base in tRNA. The active-site Nucleophile is cysteine 108. A disulfide bridge connects residues cysteine 108 and cysteine 205. Glycine 133 lines the ATP pocket. An interaction with tRNA region spans residues 155-157 (KDQ). The active-site Cysteine persulfide intermediate is cysteine 205. Residues 317-318 (RY) form an interaction with tRNA region.

It belongs to the MnmA/TRMU family.

Its subcellular location is the cytoplasm. It carries out the reaction S-sulfanyl-L-cysteinyl-[protein] + uridine(34) in tRNA + AH2 + ATP = 2-thiouridine(34) in tRNA + L-cysteinyl-[protein] + A + AMP + diphosphate + H(+). Its function is as follows. Catalyzes the 2-thiolation of uridine at the wobble position (U34) of tRNA, leading to the formation of s(2)U34. This is tRNA-specific 2-thiouridylase MnmA from Shewanella sediminis (strain HAW-EB3).